Consider the following 266-residue polypeptide: 15-hydroxyprostaglandin dehydrogenase [NAD(+)] (266 aa).

Residues 12–20 (GAAQGIGKA), 36–37 (DW), 63–65 (CDV), and Asn91 contribute to the NAD(+) site. Substrate contacts are provided by Ser138 and Gln148. The active-site Proton acceptor is Tyr151. NAD(+)-binding positions include 151-155 (YCASK) and 186-188 (VKT).

The protein belongs to the short-chain dehydrogenases/reductases (SDR) family. Homodimer.

The protein localises to the cytoplasm. It carries out the reaction prostaglandin E2 + NAD(+) = 15-oxoprostaglandin E2 + NADH + H(+). It catalyses the reaction (15S)-hydroxy-(5Z,8Z,11Z,13E)-eicosatetraenoate + NAD(+) = 15-oxo-(5Z,8Z,11Z,13E)-eicosatetraenoate + NADH + H(+). The catalysed reaction is (11R)-hydroxy-(5Z,8Z,12E,14Z)-eicosatetraenoate + NAD(+) = 11-oxo-(5Z,8Z,12E,14Z)-eicosatetraenoate + NADH + H(+). The enzyme catalyses lipoxin A4 + NAD(+) = 15-oxo-(5S,6R)-dihydroxy-(7E,9E,11Z,13E)-eicosatetraenoate + NADH + H(+). It carries out the reaction 15-oxo-(5S,6R)-dihydroxy-(7E,9E,11Z)-eicosatrienoate + NADH + H(+) = (5S,6R,15S)-trihydroxy-(7E,9E,11Z)-eicosatrienoate + NAD(+). It catalyses the reaction prostaglandin A1 + NAD(+) = 15-oxo-prostaglandin A1 + NADH + H(+). The catalysed reaction is prostaglandin E1 + NAD(+) = 15-oxoprostaglandin E1 + NADH + H(+). The enzyme catalyses 14-hydroxy-(4Z,7Z,10Z,12E,16Z,19Z)-docosahexaenoate + NAD(+) = 14-oxo-(4Z,7Z,10Z,12E,16Z,19Z)-docosahexaenoate + NADH + H(+). It carries out the reaction resolvin E1 + NAD(+) = 18-oxo-resolvin E1 + NADH + H(+). It catalyses the reaction resolvin D1 + NAD(+) = 8-oxoresolvin D1 + NADH + H(+). The catalysed reaction is resolvin D1 + NAD(+) = 17-oxoresolvin D1 + NADH + H(+). The enzyme catalyses resolvin D2 + NAD(+) = 7-oxoresolvin D2 + NADH + H(+). It carries out the reaction resolvin D2 + NAD(+) = 16-oxoresolvin D2 + NADH + H(+). Functionally, catalyzes the NAD-dependent dehydrogenation (oxidation) of a broad array of hydroxylated polyunsaturated fatty acids (mainly eicosanoids and docosanoids, including prostaglandins, lipoxins and resolvins), yielding their corresponding keto (oxo) metabolites. Decreases the levels of the pro-proliferative prostaglandins such as prostaglandin E2 (whose activity is increased in cancer because of an increase in the expression of cyclooxygenase 2) and generates oxo-fatty acid products that can profoundly influence cell function by abrogating pro-inflammatory cytokine expression. Converts resolvins E1, D1 and D2 to their oxo products, which represents a mode of resolvin inactivation. Resolvin E1 plays important roles during the resolution phase of acute inflammation, while resolvins D1 and D2 have a unique role in obesity-induced adipose inflammation. The chain is 15-hydroxyprostaglandin dehydrogenase [NAD(+)] (Hpgd) from Rattus norvegicus (Rat).